Here is a 357-residue protein sequence, read N- to C-terminus: Peptide chain release factor 1 (357 aa).

Gln-232 is subject to N5-methylglutamine. Residues 281 to 305 show a composition bias toward basic and acidic residues; it reads DRQHNEMAADRRSQVGSGDRSERIR. The disordered stretch occupies residues 281–309; it reads DRQHNEMAADRRSQVGSGDRSERIRTYNF.

Belongs to the prokaryotic/mitochondrial release factor family. Post-translationally, methylated by PrmC. Methylation increases the termination efficiency of RF1.

Its subcellular location is the cytoplasm. Its function is as follows. Peptide chain release factor 1 directs the termination of translation in response to the peptide chain termination codons UAG and UAA. The protein is Peptide chain release factor 1 of Nitratidesulfovibrio vulgaris (strain DSM 19637 / Miyazaki F) (Desulfovibrio vulgaris).